Reading from the N-terminus, the 617-residue chain is Arrestin domain-containing protein B (617 aa).

The C2 domain maps to Met-1–Leu-109. 5 residues coordinate Ca(2+): Asp-20, Asp-27, Asp-76, Asp-78, and Asp-84.

Belongs to the arrestin family. Ca(2+) serves as cofactor.

This Dictyostelium discoideum (Social amoeba) protein is Arrestin domain-containing protein B (adcB).